A 215-amino-acid chain; its full sequence is UPF0056 membrane protein bbp_248 (215 aa).

The next 6 helical transmembrane spans lie at 10–32 (IYIS…PIFT), 52–74 (FSVA…LFGI), 78–100 (SFRI…GNFI), 119–141 (ISIV…TIVW), 151–169 (IFGC…WTLF), and 190–207 (IMGL…LAGL).

Belongs to the UPF0056 (MarC) family.

It is found in the cell membrane. This Buchnera aphidicola subsp. Baizongia pistaciae (strain Bp) protein is UPF0056 membrane protein bbp_248.